The primary structure comprises 291 residues: MDVLTDQDVQKFRDEGYLVLEGLLSPEECDALRRRMSEIIESMDVPEHCRTQFSTDHDEQLKTQGNADYFITSGDKIRFFFEKGVFDDKGEFVVPKEQSLNKIGHALHAYEPLFKRVTHSPKVQNICKKLELINPVILQSMYIFKQPGIGGEVTPHQDATFLYTQPLGRVMGVWVALEDAMQENGCLWFIPGSHNDGITRRMVRTPKGTFPLTDFIGREKDYDDKLFVPAPVKKGGAVLIHGEVVHRSAANTSDASRHVYTFHIMESENTVWSPENWLQATEELPFPSLYT.

Residues Lys-102, Met-141, 156-158 (HQD), and Trp-174 each bind 2-oxoglutarate. Residues His-156 and Asp-158 each coordinate Fe cation. His-246 provides a ligand contact to Fe cation. Residues Ser-248 and Arg-257 each contribute to the 2-oxoglutarate site.

It belongs to the PhyH family. PHYHD1 subfamily. The cofactor is Fe cation.

Functionally, 2-oxoglutarate(2OG)-dependent dioxygenase that catalyzes the conversion of 2-oxoglutarate to succinate and CO(2) in an iron-dependent manner. However, does not couple 2OG turnover to the hydroxylation of acyl-coenzyme A derivatives, implying that it is not directly involved in phytanoyl coenzyme-A metabolism. Does not show detectable activity towards fatty acid CoA thioesters. The polypeptide is Phytanoyl-CoA dioxygenase domain-containing protein 1 (phyhd1) (Danio rerio (Zebrafish)).